The following is a 660-amino-acid chain: Alpha-1,2-mannosyltransferase MNN21 (660 aa).

The Cytoplasmic portion of the chain corresponds to 1–17 (MFQQLTYRLRLFRRRHK). A helical membrane pass occupies residues 18–38 (YIFINSIFLSVIIIFLIYSYW). Over 39–660 (SNLPAEDNSA…FLESTQNITD (622 aa)) the chain is Extracellular. The disordered stretch occupies residues 75–125 (PFEEKKPQVNPNNNQEVGVESGASEISQHKQQQQQQQHAKEPTTKTSSKSL). An N-linked (GlcNAc...) asparagine glycan is attached at Asn657.

This sequence belongs to the MNN1/MNT family.

The protein resides in the golgi apparatus membrane. It participates in protein modification; protein glycosylation. In terms of biological role, alpha-1,2-mannosyltransferase required for cell wall integrity. Responsible for addition of the first alpha-1,2-linked mannose to form the branches on the mannan backbone of oligosaccharides. Addition of alpha-1,2-mannose is required for stabilization of the alpha-1,6-mannose backbone and hence regulates mannan fibril length; and is important for both immune recognition and virulence. The polypeptide is Alpha-1,2-mannosyltransferase MNN21 (MNN21) (Candida albicans (strain SC5314 / ATCC MYA-2876) (Yeast)).